A 469-amino-acid polypeptide reads, in one-letter code: Ribulose bisphosphate carboxylase large chain (469 aa).

Position 5 is an N6,N6,N6-trimethyllysine (Lys-5). Substrate is bound by residues Asn-114 and Thr-164. The active-site Proton acceptor is the Lys-166. Position 168 (Lys-168) interacts with substrate. Mg(2+) is bound by residues Lys-192, Asp-194, and Glu-195. Residue Lys-192 is modified to N6-carboxylysine. Catalysis depends on His-285, which acts as the Proton acceptor. Substrate contacts are provided by Arg-286, His-318, and Ser-370.

It belongs to the RuBisCO large chain family. Type I subfamily. In terms of assembly, heterohexadecamer of 8 large chains and 8 small chains; disulfide-linked. The disulfide link is formed within the large subunit homodimers. It depends on Mg(2+) as a cofactor. The disulfide bond which can form in the large chain dimeric partners within the hexadecamer appears to be associated with oxidative stress and protein turnover.

It localises to the plastid. Its subcellular location is the chloroplast. It catalyses the reaction 2 (2R)-3-phosphoglycerate + 2 H(+) = D-ribulose 1,5-bisphosphate + CO2 + H2O. The enzyme catalyses D-ribulose 1,5-bisphosphate + O2 = 2-phosphoglycolate + (2R)-3-phosphoglycerate + 2 H(+). Functionally, ruBisCO catalyzes two reactions: the carboxylation of D-ribulose 1,5-bisphosphate, the primary event in carbon dioxide fixation, as well as the oxidative fragmentation of the pentose substrate in the photorespiration process. Both reactions occur simultaneously and in competition at the same active site. The sequence is that of Ribulose bisphosphate carboxylase large chain from Cephalanthus occidentalis (Common buttonbush).